We begin with the raw amino-acid sequence, 485 residues long: uncharacterized protein (485 aa).

The next 13 membrane-spanning stretches (helical) occupy residues 13 to 33, 38 to 58, 79 to 99, 111 to 131, 160 to 180, 211 to 231, 234 to 254, 297 to 317, 321 to 341, 365 to 385, 388 to 408, 420 to 440, and 445 to 465; these read WSAL…VILS, PFEF…DMLA, ALYW…IILS, LSFL…GQQY, VIIG…LLTV, LLFS…SSIT, IVAR…FNVA, INFP…YLVF, WLFI…RMVA, IIIF…VGAA, FLIC…KPVL, FIPF…DIYI, and LTFF…TIFI.

This sequence belongs to the polysaccharide synthase family.

Its subcellular location is the cell membrane. This is an uncharacterized protein from Klebsiella pneumoniae.